Here is a 202-residue protein sequence, read N- to C-terminus: MAETAASRTGSVSRKTNETSISVSVNLDGTGKSKISTGVGFFDHMLDQLARHSLIDMEIDAKGDLHIDDHHTVEDTGIAIGQAISKALGDRRGITRYASIDLAMDETMTKAAVDLSGRPFLVWNVAFSAPKIGTFDTELVREFFQALAQNAGITLHILNHYGANNHHIAETCFKAVARALRTATEIDPRQAGRVPSTKGTLV.

It belongs to the imidazoleglycerol-phosphate dehydratase family.

Its subcellular location is the cytoplasm. It catalyses the reaction D-erythro-1-(imidazol-4-yl)glycerol 3-phosphate = 3-(imidazol-4-yl)-2-oxopropyl phosphate + H2O. It functions in the pathway amino-acid biosynthesis; L-histidine biosynthesis; L-histidine from 5-phospho-alpha-D-ribose 1-diphosphate: step 6/9. The polypeptide is Imidazoleglycerol-phosphate dehydratase (Rhizobium etli (strain CIAT 652)).